A 353-amino-acid chain; its full sequence is D-alanine--D-alanine ligase (353 aa).

An ATP-grasp domain is found at 141-349 (KAAFAAAGLS…LPQLVAELVD (209 aa)). 176 to 231 (EQELGYPCFVKPANLGSSVGITKANNRDELLAGLHQAAALDPRLLVEQGVNARELE) is a binding site for ATP. Residues Asp-302, Glu-316, and Asn-318 each coordinate Mg(2+).

This sequence belongs to the D-alanine--D-alanine ligase family. Mg(2+) serves as cofactor. Requires Mn(2+) as cofactor.

It is found in the cytoplasm. The catalysed reaction is 2 D-alanine + ATP = D-alanyl-D-alanine + ADP + phosphate + H(+). It functions in the pathway cell wall biogenesis; peptidoglycan biosynthesis. In terms of biological role, cell wall formation. The polypeptide is D-alanine--D-alanine ligase (Synechococcus sp. (strain WH7803)).